Here is a 425-residue protein sequence, read N- to C-terminus: Serine--tRNA ligase (425 aa).

Residue 231-233 participates in L-serine binding; that stretch reads TAE. 262–264 is an ATP binding site; the sequence is RSE. Glu285 lines the L-serine pocket. 349-352 provides a ligand contact to ATP; sequence EISS. Ser385 lines the L-serine pocket.

The protein belongs to the class-II aminoacyl-tRNA synthetase family. Type-1 seryl-tRNA synthetase subfamily. In terms of assembly, homodimer. The tRNA molecule binds across the dimer.

The protein localises to the cytoplasm. It carries out the reaction tRNA(Ser) + L-serine + ATP = L-seryl-tRNA(Ser) + AMP + diphosphate + H(+). The catalysed reaction is tRNA(Sec) + L-serine + ATP = L-seryl-tRNA(Sec) + AMP + diphosphate + H(+). Its pathway is aminoacyl-tRNA biosynthesis; selenocysteinyl-tRNA(Sec) biosynthesis; L-seryl-tRNA(Sec) from L-serine and tRNA(Sec): step 1/1. Catalyzes the attachment of serine to tRNA(Ser). Is also able to aminoacylate tRNA(Sec) with serine, to form the misacylated tRNA L-seryl-tRNA(Sec), which will be further converted into selenocysteinyl-tRNA(Sec). The protein is Serine--tRNA ligase of Bartonella quintana (strain Toulouse) (Rochalimaea quintana).